A 297-amino-acid chain; its full sequence is tRNA dimethylallyltransferase (297 aa).

10 to 17 (APTGAGKT) serves as a coordination point for ATP. Residue 12-17 (TGAGKT) coordinates substrate. The interval 34–37 (DSRQ) is interaction with substrate tRNA.

The protein belongs to the IPP transferase family. In terms of assembly, monomer. Mg(2+) is required as a cofactor.

It carries out the reaction adenosine(37) in tRNA + dimethylallyl diphosphate = N(6)-dimethylallyladenosine(37) in tRNA + diphosphate. In terms of biological role, catalyzes the transfer of a dimethylallyl group onto the adenine at position 37 in tRNAs that read codons beginning with uridine, leading to the formation of N6-(dimethylallyl)adenosine (i(6)A). The chain is tRNA dimethylallyltransferase from Leptospira interrogans serogroup Icterohaemorrhagiae serovar Lai (strain 56601).